The sequence spans 371 residues: Alanine dehydrogenase (371 aa).

Substrate contacts are provided by R15 and K75. H96 serves as the catalytic Proton donor/acceptor. Residues S134, D198, R203, S220, 239 to 240 (VL), 267 to 270 (VAID), K279, and 298 to 301 (VANM) each bind NAD(+). D270 functions as the Proton donor/acceptor in the catalytic mechanism.

It belongs to the AlaDH/PNT family. Requires Mg(2+) as cofactor.

It carries out the reaction L-alanine + NAD(+) + H2O = pyruvate + NH4(+) + NADH + H(+). It functions in the pathway amino-acid degradation; L-alanine degradation via dehydrogenase pathway; NH(3) and pyruvate from L-alanine: step 1/1. Functionally, catalyzes the reversible reductive amination of pyruvate to L-alanine. In Halomonas elongata (strain ATCC 33173 / DSM 2581 / NBRC 15536 / NCIMB 2198 / 1H9), this protein is Alanine dehydrogenase.